The chain runs to 444 residues: ATP-dependent protease ATPase subunit HslU (444 aa).

ATP-binding positions include Ile18, 60–65 (GVGKTE), Asp256, Glu322, and Arg394.

This sequence belongs to the ClpX chaperone family. HslU subfamily. In terms of assembly, a double ring-shaped homohexamer of HslV is capped on each side by a ring-shaped HslU homohexamer. The assembly of the HslU/HslV complex is dependent on binding of ATP.

The protein localises to the cytoplasm. In terms of biological role, ATPase subunit of a proteasome-like degradation complex; this subunit has chaperone activity. The binding of ATP and its subsequent hydrolysis by HslU are essential for unfolding of protein substrates subsequently hydrolyzed by HslV. HslU recognizes the N-terminal part of its protein substrates and unfolds these before they are guided to HslV for hydrolysis. The chain is ATP-dependent protease ATPase subunit HslU from Klebsiella pneumoniae (strain 342).